We begin with the raw amino-acid sequence, 447 residues long: Serine/threonine-protein kinase NLK2 (447 aa).

In terms of domain architecture, Protein kinase spans 60–349 (PEPDRPIGYG…AKDALAHPYL (290 aa)). ATP-binding positions include 66-74 (IGYGAFGVV) and Lys89. Asp186 functions as the Proton acceptor in the catalytic mechanism.

The protein belongs to the protein kinase superfamily. CMGC Ser/Thr protein kinase family. MAP kinase subfamily. In terms of assembly, interacts with sox11, hmgxb4/hmg2l1, rnf138/narf, stat3.1 and mef2a. It depends on Mg(2+) as a cofactor. In terms of tissue distribution, expressed widely in the ectoderm during early gastrula stage when neural induction is taking place. Expressed in the head region of neurula stage embryos. At the end of neurulation, expression becomes localized to the nervous system, and is restricted to the central nervous system, eye and head neural crest cells by the early tadpole stages.

It localises to the nucleus. Its subcellular location is the cytoplasm. It catalyses the reaction L-seryl-[protein] + ATP = O-phospho-L-seryl-[protein] + ADP + H(+). The enzyme catalyses L-threonyl-[protein] + ATP = O-phospho-L-threonyl-[protein] + ADP + H(+). Its activity is regulated as follows. Activated by tyrosine and threonine phosphorylation. Its function is as follows. Negatively regulates Wnt/beta-catenin-signaling during development. Plays a role together with sox11 in neural induction during early embryogenesis. Involved in TGFbeta-mediated mesoderm induction in early embryos, acting downstream of map3k7/tak1 to phosphorylate stat3.1. Augments the rnf138/narf-directed ubiquitination and degradation of tcf/lef by enhancing the association of rnf138/narf and tcf/lef. Phosphorylates mef2a to play a role in anterior neural development, including eye formation. This chain is Serine/threonine-protein kinase NLK2 (nlk.2), found in Xenopus laevis (African clawed frog).